The primary structure comprises 214 residues: Large ribosomal subunit protein uL3 (214 aa).

The interval 133–155 is disordered; that stretch reads ATHGNSRSHRVPGSTGQCQSPGR. Position 151 is an N5-methylglutamine (Gln-151).

This sequence belongs to the universal ribosomal protein uL3 family. Part of the 50S ribosomal subunit. Forms a cluster with proteins L14 and L19. Post-translationally, methylated by PrmB.

Functionally, one of the primary rRNA binding proteins, it binds directly near the 3'-end of the 23S rRNA, where it nucleates assembly of the 50S subunit. The polypeptide is Large ribosomal subunit protein uL3 (Cellvibrio japonicus (strain Ueda107) (Pseudomonas fluorescens subsp. cellulosa)).